Reading from the N-terminus, the 325-residue chain is ATP-dependent 6-phosphofructokinase (325 aa).

Glycine 12 lines the ATP pocket. 22–26 contributes to the ADP binding site; sequence RTIVK. Residues 73–74 and 103–106 each bind ATP; these read RY and GDGS. Aspartate 104 is a binding site for Mg(2+). A substrate-binding site is contributed by 126–128; sequence TID. Aspartate 128 serves as the catalytic Proton acceptor. Arginine 155 contacts ADP. 170–172 lines the substrate pocket; it reads MGH. Residues 186-188, lysine 213, and 215-217 each bind ADP; these read GAE and KRS. Substrate contacts are provided by residues glutamate 224, arginine 246, and 252–255; that span reads HTQR.

It belongs to the phosphofructokinase type A (PFKA) family. ATP-dependent PFK group I subfamily. Prokaryotic clade 'B1' sub-subfamily. In terms of assembly, homotetramer. Mg(2+) is required as a cofactor.

The protein localises to the cytoplasm. It catalyses the reaction beta-D-fructose 6-phosphate + ATP = beta-D-fructose 1,6-bisphosphate + ADP + H(+). It functions in the pathway carbohydrate degradation; glycolysis; D-glyceraldehyde 3-phosphate and glycerone phosphate from D-glucose: step 3/4. With respect to regulation, allosterically activated by ADP and other diphosphonucleosides, and allosterically inhibited by phosphoenolpyruvate. Its function is as follows. Catalyzes the phosphorylation of D-fructose 6-phosphate to fructose 1,6-bisphosphate by ATP, the first committing step of glycolysis. This is ATP-dependent 6-phosphofructokinase from Mycoplasma mobile (strain ATCC 43663 / 163K / NCTC 11711) (Mesomycoplasma mobile).